Here is a 906-residue protein sequence, read N- to C-terminus: Ribonucleoside-diphosphate reductase large subunit-like protein (906 aa).

Disordered stretches follow at residues 1–70 and 89–129; these read MNPA…AGNT and VSWR…LSTF. Residues 98-109 show a composition bias toward polar residues; sequence PDGTPSVLSLTR.

It belongs to the ribonucleoside diphosphate reductase large chain family.

It localises to the virion. The protein localises to the host cytoplasm. Does not possess a ribonucleotide reductase activity. Betaherpesviruses probably use another strategy to expand the dNTP pool in a quiescent host cell. The sequence is that of Ribonucleoside-diphosphate reductase large subunit-like protein from Homo sapiens (Human).